Here is a 273-residue protein sequence, read N- to C-terminus: UPF0173 metal-dependent hydrolase Bpro_4324 (273 aa).

It belongs to the UPF0173 family.

This chain is UPF0173 metal-dependent hydrolase Bpro_4324, found in Polaromonas sp. (strain JS666 / ATCC BAA-500).